The sequence spans 1067 residues: Kinesin-like protein KIF11-A (1067 aa).

Residues 18 to 359 (NIQVVVRCRP…LDYASRAKNI (342 aa)) form the Kinesin motor domain. Residue 105-112 (GQTGTGKT) participates in ATP binding. Coiled coils occupy residues 365–480 (VNQK…QEAF), 692–721 (DSSS…HSEG), and 882–915 (QAQE…QVQS). At Thr937 the chain carries Phosphothreonine; by CDK1. A Phosphoserine; by NEK6 modification is found at Ser1046.

The protein belongs to the TRAFAC class myosin-kinesin ATPase superfamily. Kinesin family. BimC subfamily. As to quaternary structure, heterotetramer of two heavy and two light chains. Interacts with aurka. Post-translationally, phosphorylation of Thr-937 during mitosis controls the association of this protein with the spindle apparatus. A subset of this protein primarily localized at the spindle pole is phosphorylated by NEK6 during mitosis. In terms of processing, phosphorylated on a serine residue by aurka. Highly expressed in unfertilized eggs, especially in the germinal vesicle and in the radial yolk-poor channels. Also present in testis.

Its subcellular location is the cytoplasm. The protein localises to the cytoskeleton. The protein resides in the spindle pole. Its function is as follows. Plus end-directed motor protein required for establishing a bipolar spindle. Associates with both interphase and spindle microtubules. May be involved in nuclear divisions taking place during the development of unfertilized eggs. Required in non-mitotic cells for transport of secretory proteins from the Golgi complex to the cell surface. This is Kinesin-like protein KIF11-A (kif11-a) from Xenopus laevis (African clawed frog).